The primary structure comprises 483 residues: Protein nucleotidyltransferase YdiU (483 aa).

The ATP site is built by Gly81, Gly83, Arg84, Lys103, Asp115, Gly116, Arg166, and Arg173. Asp244 (proton acceptor) is an active-site residue. Positions 245 and 254 each coordinate Mg(2+). Asp254 contributes to the ATP binding site.

The protein belongs to the SELO family. Mg(2+) serves as cofactor. The cofactor is Mn(2+).

The enzyme catalyses L-seryl-[protein] + ATP = 3-O-(5'-adenylyl)-L-seryl-[protein] + diphosphate. The catalysed reaction is L-threonyl-[protein] + ATP = 3-O-(5'-adenylyl)-L-threonyl-[protein] + diphosphate. It carries out the reaction L-tyrosyl-[protein] + ATP = O-(5'-adenylyl)-L-tyrosyl-[protein] + diphosphate. It catalyses the reaction L-histidyl-[protein] + UTP = N(tele)-(5'-uridylyl)-L-histidyl-[protein] + diphosphate. The enzyme catalyses L-seryl-[protein] + UTP = O-(5'-uridylyl)-L-seryl-[protein] + diphosphate. The catalysed reaction is L-tyrosyl-[protein] + UTP = O-(5'-uridylyl)-L-tyrosyl-[protein] + diphosphate. Nucleotidyltransferase involved in the post-translational modification of proteins. It can catalyze the addition of adenosine monophosphate (AMP) or uridine monophosphate (UMP) to a protein, resulting in modifications known as AMPylation and UMPylation. The polypeptide is Protein nucleotidyltransferase YdiU (Shewanella pealeana (strain ATCC 700345 / ANG-SQ1)).